A 537-amino-acid polypeptide reads, in one-letter code: Chaperonin GroEL 2 (537 aa).

ATP-binding positions include 29–32, 86–90, G412, and D495; these read TLGP and DGTTT.

The protein belongs to the chaperonin (HSP60) family. As to quaternary structure, forms a cylinder of 14 subunits composed of two heptameric rings stacked back-to-back. Interacts with the co-chaperonin GroES.

Its subcellular location is the cytoplasm. It catalyses the reaction ATP + H2O + a folded polypeptide = ADP + phosphate + an unfolded polypeptide.. In terms of biological role, together with its co-chaperonin GroES, plays an essential role in assisting protein folding. The GroEL-GroES system forms a nano-cage that allows encapsulation of the non-native substrate proteins and provides a physical environment optimized to promote and accelerate protein folding. The sequence is that of Chaperonin GroEL 2 from Paenarthrobacter aurescens (strain TC1).